The sequence spans 122 residues: Large ribosomal subunit protein uL14 (122 aa).

The protein belongs to the universal ribosomal protein uL14 family. Part of the 50S ribosomal subunit. Forms a cluster with proteins L3 and L19. In the 70S ribosome, L14 and L19 interact and together make contacts with the 16S rRNA in bridges B5 and B8.

Its function is as follows. Binds to 23S rRNA. Forms part of two intersubunit bridges in the 70S ribosome. The sequence is that of Large ribosomal subunit protein uL14 from Idiomarina loihiensis (strain ATCC BAA-735 / DSM 15497 / L2-TR).